The following is a 347-amino-acid chain: MSVMFDPQAAIYPFPPKPTPLNDDEKQFYREKIKRLLKERNAVMVAHYYTDPEIQQLAEETGGCISDSLEMARFGAKHAASTLLVSGVRFMGETAKILSPEKNILMPTLAAECSLDLGCPIDEFSAFCDAHPDRTVVVYANTSAAVKARADWVVTSSIAVELIEHLDSLGEKIIWAPDRHLGNYVQKQTGADVLCWQGACIVHDEFKTQALTRLKKIYPYAALLVHPESPQSIVEMADAVGSTSQLIKAAKTLPHRQLIVATDRGIFYKMQQAVPEKELLEAPTAGEGATCRSCAHCPWMAMNGLKAIAEGLEQGGAAHEIQVDAALREGALLPLNRMLDFVATLRA.

The iminosuccinate site is built by His-47 and Ser-68. Residue Cys-113 participates in [4Fe-4S] cluster binding. Residues Tyr-139–Asn-141 and Ser-156 each bind iminosuccinate. Cys-200 contacts [4Fe-4S] cluster. Iminosuccinate is bound by residues His-226–Glu-228 and Thr-243. Cys-297 is a [4Fe-4S] cluster binding site.

The protein belongs to the quinolinate synthase family. Type 1 subfamily. The cofactor is [4Fe-4S] cluster.

Its subcellular location is the cytoplasm. It carries out the reaction iminosuccinate + dihydroxyacetone phosphate = quinolinate + phosphate + 2 H2O + H(+). The protein operates within cofactor biosynthesis; NAD(+) biosynthesis; quinolinate from iminoaspartate: step 1/1. Catalyzes the condensation of iminoaspartate with dihydroxyacetone phosphate to form quinolinate. This is Quinolinate synthase from Salmonella gallinarum (strain 287/91 / NCTC 13346).